The chain runs to 301 residues: Type II restriction enzyme BslI subunit beta (301 aa).

The CHC2-type zinc-finger motif lies at 62–82 (CPDGHTKWNQNLTKEMTCSEC).

In terms of assembly, heterotetramer of two alpha and two beta subunits. The alpha subunit is believed to be responsible for DNA recognition, while the beta subunit is thought to mediate cleavage. Requires Zn(2+) as cofactor.

The catalysed reaction is Endonucleolytic cleavage of DNA to give specific double-stranded fragments with terminal 5'-phosphates.. A P subtype restriction enzyme that recognizes the double-stranded sequence 5'-CCN(7)GG-3' and cleaves after N-7. In Bacillus sp. (strain NEB-606), this protein is Type II restriction enzyme BslI subunit beta.